We begin with the raw amino-acid sequence, 412 residues long: Argininosuccinate synthase (412 aa).

Residues 20 to 28 (AYSGGLDTS) and Ala-48 each bind ATP. L-citrulline is bound by residues Tyr-100 and Ser-105. Gly-130 provides a ligand contact to ATP. L-aspartate-binding residues include Thr-132, Asn-136, and Asp-137. Asn-136 contacts L-citrulline. Positions 140, 189, 198, 274, and 286 each coordinate L-citrulline.

Belongs to the argininosuccinate synthase family. Type 1 subfamily. In terms of assembly, homotetramer.

Its subcellular location is the cytoplasm. The enzyme catalyses L-citrulline + L-aspartate + ATP = 2-(N(omega)-L-arginino)succinate + AMP + diphosphate + H(+). The protein operates within amino-acid biosynthesis; L-arginine biosynthesis; L-arginine from L-ornithine and carbamoyl phosphate: step 2/3. This Shewanella pealeana (strain ATCC 700345 / ANG-SQ1) protein is Argininosuccinate synthase.